The chain runs to 122 residues: Small ribosomal subunit protein uS13 (122 aa).

The interval 93–122 (RRGLPVRGQKTKTNARTRKGPKKTIANKKK) is disordered.

This sequence belongs to the universal ribosomal protein uS13 family. Part of the 30S ribosomal subunit. Forms a loose heterodimer with protein S19. Forms two bridges to the 50S subunit in the 70S ribosome.

In terms of biological role, located at the top of the head of the 30S subunit, it contacts several helices of the 16S rRNA. In the 70S ribosome it contacts the 23S rRNA (bridge B1a) and protein L5 of the 50S subunit (bridge B1b), connecting the 2 subunits; these bridges are implicated in subunit movement. Contacts the tRNAs in the A and P-sites. This is Small ribosomal subunit protein uS13 from Clostridium beijerinckii (strain ATCC 51743 / NCIMB 8052) (Clostridium acetobutylicum).